The primary structure comprises 148 residues: Deoxyuridine 5'-triphosphate nucleotidohydrolase (148 aa).

Residues 68-70, asparagine 81, and 85-87 contribute to the substrate site; these read RSG and TID.

It belongs to the dUTPase family. It depends on Mg(2+) as a cofactor.

The enzyme catalyses dUTP + H2O = dUMP + diphosphate + H(+). The protein operates within pyrimidine metabolism; dUMP biosynthesis; dUMP from dCTP (dUTP route): step 2/2. In terms of biological role, this enzyme is involved in nucleotide metabolism: it produces dUMP, the immediate precursor of thymidine nucleotides and it decreases the intracellular concentration of dUTP so that uracil cannot be incorporated into DNA. The chain is Deoxyuridine 5'-triphosphate nucleotidohydrolase from Geobacter metallireducens (strain ATCC 53774 / DSM 7210 / GS-15).